The sequence spans 339 residues: Heat-inducible transcription repressor HrcA (339 aa).

The protein belongs to the HrcA family.

In terms of biological role, negative regulator of class I heat shock genes (grpE-dnaK-dnaJ and groELS operons). Prevents heat-shock induction of these operons. The protein is Heat-inducible transcription repressor HrcA of Paraburkholderia xenovorans (strain LB400).